Here is a 570-residue protein sequence, read N- to C-terminus: Periplasmic trehalase (570 aa).

A signal peptide spans 1 to 34 (MIPPEIRRSVLLQKAIKLALAGTLLTFASFSATA). Residues Arg-159, 166–167 (WD), Asn-203, 212–214 (RSQ), 284–286 (RPE), and Gly-317 contribute to the substrate site. Catalysis depends on proton donor/acceptor residues Asp-319 and Glu-503. Glu-518 is a substrate binding site. Residues 544 to 570 (KPCDSVPSTRPASLSATPTKTPSAATQ) are disordered. Positions 554–570 (PASLSATPTKTPSAATQ) are enriched in low complexity.

The protein belongs to the glycosyl hydrolase 37 family. As to quaternary structure, monomer.

Its subcellular location is the periplasm. The catalysed reaction is alpha,alpha-trehalose + H2O = alpha-D-glucose + beta-D-glucose. In terms of biological role, provides the cells with the ability to utilize trehalose at high osmolarity by splitting it into glucose molecules that can subsequently be taken up by the phosphotransferase-mediated uptake system. In Salmonella schwarzengrund (strain CVM19633), this protein is Periplasmic trehalase.